Reading from the N-terminus, the 256-residue chain is Carboxysome shell protein CsoS1D (256 aa).

Positions 1-24 are disordered; that stretch reads MEPTSSLNRGDRKKGSSLVTGSEV. BMC circularly permuted domains are found at residues 55–157 and 158–256; these read ELRT…RTKP and STSW…ISNY. Positions 120-121 match the Gates the pore motif; that stretch reads ER.

This sequence belongs to the EutL/PduB family. As to quaternary structure, homotrimer. Forms a dimer of stacked trimers, the same faces interact. A CsoS1-CsoS1D-CsoS2 complex can be isolated following expression in E.coli.

The protein localises to the carboxysome. In terms of biological role, part of the carboxysome shell, a polyhedral inclusion where RuBisCO (ribulose bisphosphate carboxylase, cbbL-cbbS) is sequestered. It may control transport of RuBisCO reactants in and out of the carboxysome. There are estimated to be 6 CsoS1D hexamers per carboxysome. This chain is Carboxysome shell protein CsoS1D, found in Prochlorococcus marinus subsp. pastoris (strain CCMP1986 / NIES-2087 / MED4).